We begin with the raw amino-acid sequence, 117 residues long: Large ribosomal subunit protein bL20 (117 aa).

It belongs to the bacterial ribosomal protein bL20 family.

Its function is as follows. Binds directly to 23S ribosomal RNA and is necessary for the in vitro assembly process of the 50S ribosomal subunit. It is not involved in the protein synthesizing functions of that subunit. This Thermomicrobium roseum (strain ATCC 27502 / DSM 5159 / P-2) protein is Large ribosomal subunit protein bL20.